The following is a 149-amino-acid chain: MEIILLDRVHGLGSLGDKVRVKSGYARNYLIPNGKATEAIPSKIAEFEARRKELEEKQAQRLAASAQRAESLNGKILTVFAKAGDEGKLFGSVGTQQIVAAAEQQGLQLERQEVMMPHGTIRELGEYVVDLKLYGDIEAQVTVRVVVAE.

It belongs to the bacterial ribosomal protein bL9 family.

Binds to the 23S rRNA. The protein is Large ribosomal subunit protein bL9 of Dichelobacter nodosus (strain VCS1703A).